The following is a 926-amino-acid chain: Nitrate reductase [NADH] (926 aa).

Residues 1-85 (MAASVDRQYH…SDSEEDDDEN (85 aa)) are disordered. Positions 36–46 (YTFSNPPSSNG) are enriched in polar residues. Over residues 58–73 (DNNSNSNNGSNNNNNR) the composition is skewed to low complexity. Cys204 is a Mo-molybdopterin binding site. Positions 551–626 (SKMYSMSEVK…LEDFRIGELI (76 aa)) constitute a Cytochrome b5 heme-binding domain. 2 residues coordinate heme: His586 and His609. The region spanning 670–782 (RVKIPCKLIE…KGPLGHIEYL (113 aa)) is the FAD-binding FR-type domain. FAD-binding positions include 722 to 725 (RAYT), 739 to 743 (VVKVY), Phe744, Phe751, 756 to 758 (VMS), and Thr809.

This sequence belongs to the nitrate reductase family. As to quaternary structure, homodimer. Requires FAD as cofactor. Heme is required as a cofactor. The cofactor is Mo-molybdopterin.

It catalyses the reaction nitrite + NAD(+) + H2O = nitrate + NADH + H(+). Its function is as follows. Nitrate reductase is a key enzyme involved in the first step of nitrate assimilation in plants, fungi and bacteria. The protein is Nitrate reductase [NADH] (NIA) of Spinacia oleracea (Spinach).